The primary structure comprises 113 residues: Replication initiation control protein YabA (113 aa).

Zn(2+) contacts are provided by H86, C88, C102, and C105.

Belongs to the YabA family. In terms of assembly, homotetramer. Interacts with both DnaA and DnaN, acting as a bridge between these two proteins. Zn(2+) is required as a cofactor.

Its subcellular location is the cytoplasm. The protein resides in the nucleoid. In terms of biological role, involved in control of chromosome replication initiation. Inhibits the cooperative binding of DnaA to the oriC region, thus negatively regulating initiation of chromosome replication. Inhibits the ability of DnaA-ATP to form a helix on DNA; does not disassemble preformed DnaA-DNA helices. Decreases the residence time of DnaA on the chromosome at its binding sites (oriC, replication forks and promoter-binding sites). Tethers DnaA to the replication machinery via the DNA polymerase beta sliding clamp subunit (dnaN). Associates with oriC and other DnaA targets on the chromosome in a DnaA-dependent manner. This chain is Replication initiation control protein YabA, found in Pediococcus pentosaceus (strain ATCC 25745 / CCUG 21536 / LMG 10740 / 183-1w).